The chain runs to 440 residues: Histidinol dehydrogenase (440 aa).

3 residues coordinate NAD(+): Tyr133, Gln194, and Asn217. Ser240, Gln262, and His265 together coordinate substrate. Residues Gln262 and His265 each contribute to the Zn(2+) site. Catalysis depends on proton acceptor residues Glu330 and His331. Positions 331, 364, 418, and 423 each coordinate substrate. Residue Asp364 participates in Zn(2+) binding. His423 provides a ligand contact to Zn(2+).

The protein belongs to the histidinol dehydrogenase family. Zn(2+) is required as a cofactor.

It catalyses the reaction L-histidinol + 2 NAD(+) + H2O = L-histidine + 2 NADH + 3 H(+). It participates in amino-acid biosynthesis; L-histidine biosynthesis; L-histidine from 5-phospho-alpha-D-ribose 1-diphosphate: step 9/9. Its function is as follows. Catalyzes the sequential NAD-dependent oxidations of L-histidinol to L-histidinaldehyde and then to L-histidine. This is Histidinol dehydrogenase from Nitrosospira multiformis (strain ATCC 25196 / NCIMB 11849 / C 71).